The sequence spans 892 residues: Putative VWFA domain-containing protein ORF892 (892 aa).

Residues 109–548 form a disordered region; sequence EEQLQRRPQR…RGYAHGDEDL (440 aa). Positions 129 to 142 are enriched in polar residues; that stretch reads SEVANQRVSRSAEN. The span at 143–162 shows a compositional bias: basic and acidic residues; it reads QGKRGNEEKQQQKTPGKTEE. Residues 169-184 show a composition bias toward acidic residues; it reads ESGEEGNQQEESGEEQ. The span at 185–196 shows a compositional bias: basic and acidic residues; it reads EGVKGSRSKQRE. The segment covering 212-223 has biased composition (acidic residues); sequence ESGESESEEGQS. Composition is skewed to low complexity over residues 224-238 and 271-283; these read SEET…GNQQ and GNGQ…AQNG. Residues 287–300 are compositionally biased toward acidic residues; the sequence is GESEGEITESESAS. Low complexity predominate over residues 301–323; that stretch reads EEQTGSKGKSGQQGEEGQQQSGS. Composition is skewed to acidic residues over residues 324–336 and 425–448; these read EGEE…ESGE and SESE…ETEE. Residues 453–466 are compositionally biased toward low complexity; it reads SEAEGTAAEGEVGQ. 2 stretches are compositionally biased toward polar residues: residues 467–481 and 512–531; these read PSEQ…SGQR and QTGS…QQGE. Residues 536 to 546 show a composition bias toward basic and acidic residues; it reads EGGRGYAHGDE. Residues 553–620 are a coiled coil; it reads QEINSILQTL…VQKLLKDLNV (68 aa). The VWFA domain occupies 723 to 892; sequence DFLFVIDSSG…GNIVLKRLVH (170 aa).

The chain is Putative VWFA domain-containing protein ORF892 from Acidianus two-tailed virus (ATV).